A 103-amino-acid polypeptide reads, in one-letter code: Co-chaperonin GroES (103 aa).

It belongs to the GroES chaperonin family. Heptamer of 7 subunits arranged in a ring. Interacts with the chaperonin GroEL.

Its subcellular location is the cytoplasm. Its function is as follows. Together with the chaperonin GroEL, plays an essential role in assisting protein folding. The GroEL-GroES system forms a nano-cage that allows encapsulation of the non-native substrate proteins and provides a physical environment optimized to promote and accelerate protein folding. GroES binds to the apical surface of the GroEL ring, thereby capping the opening of the GroEL channel. The sequence is that of Co-chaperonin GroES from Trichodesmium erythraeum (strain IMS101).